Reading from the N-terminus, the 755-residue chain is Catalase-peroxidase (755 aa).

A cross-link (tryptophyl-tyrosyl-methioninium (Trp-Tyr) (with M-271)) is located at residues 91 to 245; it reads WHSAGTYRTA…LAAVQMGLIY (155 aa). Residue His92 is the Proton acceptor of the active site. Residues 193–229 form a disordered region; that stretch reads DNRYGKDPESMQPPGEGTLVAEPAEHGNEESRTNQGE. Residues 215-224 are compositionally biased toward basic and acidic residues; it reads PAEHGNEESR. A cross-link (tryptophyl-tyrosyl-methioninium (Tyr-Met) (with W-91)) is located at residues 245 to 271; it reads YVNPEGPEGNPDPVASAKDIRETFGRM. His286 contributes to the heme binding site.

The protein belongs to the peroxidase family. Peroxidase/catalase subfamily. In terms of assembly, homodimer or homotetramer. It depends on heme b as a cofactor. Formation of the three residue Trp-Tyr-Met cross-link is important for the catalase, but not the peroxidase activity of the enzyme.

The catalysed reaction is H2O2 + AH2 = A + 2 H2O. It catalyses the reaction 2 H2O2 = O2 + 2 H2O. Bifunctional enzyme with both catalase and broad-spectrum peroxidase activity. This is Catalase-peroxidase from Pseudomonas fluorescens (strain Pf0-1).